Here is a 339-residue protein sequence, read N- to C-terminus: Formyl peptide receptor-related sequence 6 (339 aa).

The Extracellular portion of the chain corresponds to 1–23; sequence MEANFSIPQNGSEVVFYDSTTSR. 2 N-linked (GlcNAc...) asparagine glycosylation sites follow: Asn-4 and Asn-10. A helical membrane pass occupies residues 24–44; the sequence is VICIFLVVVLSITFLLGVIGN. The Cytoplasmic portion of the chain corresponds to 45–62; sequence GLVIYVAGFRMTHTVTTI. Residues 63–85 traverse the membrane as a helical segment; sequence CYLNLALSDFSYMASLPFQITSI. Residues 86-99 are Extracellular-facing; sequence VMNGEWLFGWFLCK. The cysteines at positions 98 and 178 are disulfide-linked. Residues 100–120 form a helical membrane-spanning segment; the sequence is FVHMIINVNLFLSIFLITFIA. Residues 121-144 lie on the Cytoplasmic side of the membrane; the sequence is MDRCICVLHPVWAQNHRTVNVATK. Residues 145 to 165 traverse the membrane as a helical segment; sequence VIFGAWILVLMLIFPHCIFVT. Residues 166–198 are Extracellular-facing; the sequence is TVKDESGKVHCICNFESWAATPEEQVKVSMTVS. Residues 199 to 219 traverse the membrane as a helical segment; the sequence is LISVTISFIIGFSIPMIFIVI. Residues 220–241 lie on the Cytoplasmic side of the membrane; sequence CYGLMAAKIGRRGFVNSSRPLR. Residues 242–262 traverse the membrane as a helical segment; the sequence is VLTAVAISFFVCWFPFQLIFL. Residues 263-280 lie on the Extracellular side of the membrane; it reads LGNIGNKETQNNIDTWVN. A helical membrane pass occupies residues 281-301; the sequence is TASTLASFNSCLNPILYVFLG. Residues 302–339 lie on the Cytoplasmic side of the membrane; the sequence is QQFRERLIYSLSASLERALREDSALNSDKTRNLSSQRL.

This sequence belongs to the G-protein coupled receptor 1 family. Expressed exclusively in vomeronasal tissue. Expressed in 1.2 % of a subset of sensory neurons located in the apical layer of the vomeronasal organ. Each neuron appears to express only one receptor gene. Expressed in brain, spleen, skeletal muscle and at high level in testis.

It is found in the membrane. May have an olfactory function associated with the identification of pathogens or of pathogenic states. The protein is Formyl peptide receptor-related sequence 6 (Fpr-rs6) of Mus musculus (Mouse).